A 493-amino-acid chain; its full sequence is Protein dml1 (493 aa).

Belongs to the misato family.

It is found in the mitochondrion. Involved in the partitioning of the mitochondrial organelle and mitochondrial DNA (mtDNA) inheritance. This Aspergillus oryzae (strain ATCC 42149 / RIB 40) (Yellow koji mold) protein is Protein dml1 (dml1).